Consider the following 484-residue polypeptide: Protein nucleotidyltransferase YdiU (484 aa).

8 residues coordinate ATP: glycine 81, glycine 83, arginine 84, lysine 103, aspartate 115, glycine 116, arginine 166, and arginine 173. Aspartate 244 acts as the Proton acceptor in catalysis. Residues asparagine 245 and aspartate 254 each coordinate Mg(2+). Aspartate 254 is an ATP binding site.

It belongs to the SELO family. The cofactor is Mg(2+). Mn(2+) serves as cofactor.

It catalyses the reaction L-seryl-[protein] + ATP = 3-O-(5'-adenylyl)-L-seryl-[protein] + diphosphate. The catalysed reaction is L-threonyl-[protein] + ATP = 3-O-(5'-adenylyl)-L-threonyl-[protein] + diphosphate. It carries out the reaction L-tyrosyl-[protein] + ATP = O-(5'-adenylyl)-L-tyrosyl-[protein] + diphosphate. The enzyme catalyses L-histidyl-[protein] + UTP = N(tele)-(5'-uridylyl)-L-histidyl-[protein] + diphosphate. It catalyses the reaction L-seryl-[protein] + UTP = O-(5'-uridylyl)-L-seryl-[protein] + diphosphate. The catalysed reaction is L-tyrosyl-[protein] + UTP = O-(5'-uridylyl)-L-tyrosyl-[protein] + diphosphate. Its function is as follows. Nucleotidyltransferase involved in the post-translational modification of proteins. It can catalyze the addition of adenosine monophosphate (AMP) or uridine monophosphate (UMP) to a protein, resulting in modifications known as AMPylation and UMPylation. This Shewanella baltica (strain OS195) protein is Protein nucleotidyltransferase YdiU.